We begin with the raw amino-acid sequence, 946 residues long: MISIVNGTSTLSLVAGSVETLNQAINFYTNILGLSVHSEQNDWTYLSNDDNKMIVKIQLDTKSGLSLDQVNDRRTEIIAKLNVTDWRSLDTTSVLKVQNLVALIETLTTFNYTLQITPNELYPNEVYCVGPIGYIIGFTACDEPLTLVPPLQKSHPKPGLVSNLMSKSGSQSRNIEETKAVRRNIAVMTSGGDSQGMNAAVRAVVRATIFHGSKAFAVQEGYAGLVKGGPEYIKEMKWQDVRGFLSEGGTNIGTARCMEFKERWGRLKGCKNLIDAGIDGLIVCGGDGSLTGADLFRHEWPSLIQELKDKGEITNEQFERHKHLYICGMVGSIDNDMAMTDATIGGYSALERICRAIDYIDATANSHSRAFVVEVMGRHCGWLALMAGIATSADYIFIPEKPASSKDWQDQMCDIVGKHRAQGKRKTIVIVAEGAITSDLKPITSDEVKDVLVDRLGLDTRITVLGHVQRGGTAVAFDRTLATLQGVEAVKAILELTPDVPSPLIAIDENKICRRPLVEAVRITKSVASAIEAKDFEKAMSLRDHEFKEHLANFMAMNTANHEKPTLPREKRKKIAIINIGAPAGGMNSAVYAMATYCMSRGHTPYAIHNGFAGLSRHESVKSIEWIDIEGWNSIGGSEIGTNRQTPEETDIGMIAHYFEKYQFDGLIIVGGFEAFVSLEQLERSRAMYPSFRIPMVLIPATISNNVPGTEYSLGADTCLNSLMEYCDIVKQSASATRGTAFIIDVQGGNSGYIATFASLISGAQASYVPEEGISLQQLEMDINSLREAFAVEQGMTKSGKLIIKSSNASKVLTPHTLADIFNDECHGDFDTKTAIPGHVQQGGLPSPIDRSRGDRFAIRAVQFIEDHCDVLAPYRYELDFPIDDKKILNTAAVLGIKSSRLRFTSIRHLFDFETELGRRMPKTIYWNTIRDISDQLVGRTRLDKP.

The N-terminal catalytic PFK domain 1 stretch occupies residues 1-559; the sequence is MISIVNGTST…HLANFMAMNT (559 aa). Residues Gly-192, 256–257, and 286–289 contribute to the ATP site; these read RC and GDGS. Residue Asp-287 coordinates Mg(2+). Residues 332 to 334, Arg-369, 376 to 378, Glu-433, Arg-461, and 467 to 470 each bind beta-D-fructose 6-phosphate; these read SID, MGR, and HVQR. The active-site Proton acceptor is Asp-334. The interdomain linker stretch occupies residues 560–573; the sequence is ANHEKPTLPREKRK. The tract at residues 574–946 is C-terminal regulatory PFK domain 2; sequence KIAIINIGAP…LVGRTRLDKP (373 aa). Beta-D-fructose 2,6-bisphosphate-binding positions include Arg-644, 702-706, 747-749, Lys-833, 839-842, and Arg-920; these read TISNN, QGG, and HVQQ.

The protein belongs to the phosphofructokinase type A (PFKA) family. ATP-dependent PFK group I subfamily. Eukaryotic two domain clade 'E' sub-subfamily. Heterooctamer of 4 alpha and 4 beta chains. Mg(2+) serves as cofactor.

Its subcellular location is the cytoplasm. The enzyme catalyses beta-D-fructose 6-phosphate + ATP = beta-D-fructose 1,6-bisphosphate + ADP + H(+). It participates in carbohydrate degradation; glycolysis; D-glyceraldehyde 3-phosphate and glycerone phosphate from D-glucose: step 3/4. Its activity is regulated as follows. Allosterically activated by ADP, AMP, or fructose 2,6-bisphosphate, and allosterically inhibited by ATP or citrate. In terms of biological role, catalyzes the phosphorylation of D-fructose 6-phosphate to fructose 1,6-bisphosphate by ATP, the first committing step of glycolysis. The polypeptide is ATP-dependent 6-phosphofructokinase subunit beta (PFK2) (Candida albicans (Yeast)).